The sequence spans 91 residues: Succinate dehydrogenase assembly factor 1A, mitochondrial (91 aa).

Belongs to the complex I LYR family. SDHAF1 subfamily. As to quaternary structure, interacts with the iron-sulfur protein subunit within the SDH catalytic dimer.

It localises to the mitochondrion matrix. Plays an essential role in the assembly of succinate dehydrogenase (SDH), an enzyme complex (also referred to as respiratory complex II) that is a component of both the tricarboxylic acid (TCA) cycle and the mitochondrial electron transport chain, and which couples the oxidation of succinate to fumarate with the reduction of ubiquinone (coenzyme Q) to ubiquinol. Promotes maturation of the iron-sulfur protein subunit of the SDH catalytic dimer, protecting it from the deleterious effects of oxidants. May act together with SDHAF3. The protein is Succinate dehydrogenase assembly factor 1A, mitochondrial of Dictyostelium discoideum (Social amoeba).